A 416-amino-acid polypeptide reads, in one-letter code: Casein kinase I isoform epsilon (416 aa).

A Protein kinase domain is found at 9–277 (YRLGRKIGSG…YLRQLFRNLF (269 aa)). ATP is bound by residues 15-23 (IGSGSFGDI) and lysine 38. The Proton acceptor role is filled by aspartate 128. A compositionally biased stretch (basic and acidic residues) spans 301–318 (PEDVDRERREHEREERMG). A disordered region spans residues 301 to 416 (PEDVDRERRE…TSVPFDHLGK (116 aa)). Phosphoserine occurs at positions 343 and 354. The span at 351–365 (TPASRIQQTGNTSPR) shows a compositional bias: polar residues. Threonine 362 is subject to Phosphothreonine. Position 363 is a phosphoserine (serine 363). Omega-N-methylarginine is present on arginine 382. 3 positions are modified to phosphoserine: serine 389, serine 405, and serine 408.

Belongs to the protein kinase superfamily. CK1 Ser/Thr protein kinase family. Casein kinase I subfamily. In terms of assembly, monomer. Component of the circadian core oscillator, which includes the CRY proteins, CLOCK, or NPAS2, ARTNL/BMAL1 or ARTNL2/BMAL2, CSNK1D and/or CSNK1E, TIMELESS and the PER proteins. Interacts with ANKRD6. Interacts with PER1. Interacts with DBNDD2, LRP5, LRP6 and SOCS3. Interacts with SNAI1 (via zinc fingers). Interacts with DDX3X; this interaction greatly enhances CSNK1E affinity for ATP and DVL2 phosphorylation, but inhibits DDX3X ATPase/helicase activity. In the presence of RNA, the interaction is decreased. Interacts with FAM83A, FAM83B, FAM83E and FAM83H (via DUF1669). In terms of processing, autophosphorylated. Partially dephosphorylated by PPP5C. May be dephosphorylated by PP1. In terms of tissue distribution, expressed in all tissues examined, including brain, heart, lung, liver, pancreas, kidney, placenta and skeletal muscle. Expressed in monocytes and lymphocytes but not in granulocytes.

It is found in the cytoplasm. The protein localises to the nucleus. The catalysed reaction is L-seryl-[protein] + ATP = O-phospho-L-seryl-[protein] + ADP + H(+). The enzyme catalyses L-threonyl-[protein] + ATP = O-phospho-L-threonyl-[protein] + ADP + H(+). Its activity is regulated as follows. Phosphorylation leads to a decrease in the catalytic activity. Functionally, casein kinases are operationally defined by their preferential utilization of acidic proteins such as caseins as substrates. Participates in Wnt signaling. Phosphorylates DVL1. Phosphorylates DVL2. Phosphorylates NEDD9/HEF1. Central component of the circadian clock. In balance with PP1, determines the circadian period length, through the regulation of the speed and rhythmicity of PER1 and PER2 phosphorylation. Controls PER1 and PER2 nuclear transport and degradation. Inhibits cytokine-induced granuloytic differentiation. The sequence is that of Casein kinase I isoform epsilon (Csnk1e) from Mus musculus (Mouse).